The chain runs to 347 residues: Putative [LysW]-L-2-aminoadipate/[LysW]-L-glutamate phosphate reductase (347 aa).

9 to 12 (SGYI) is an NADP(+) binding site. Residue Cys-149 is part of the active site. Asn-314 is an NADP(+) binding site.

The protein belongs to the NAGSA dehydrogenase family. Type 1 subfamily. LysY sub-subfamily.

Its subcellular location is the cytoplasm. It carries out the reaction [amino-group carrier protein]-C-terminal-N-(1-carboxy-5-oxopentan-1-yl)-L-glutamine + phosphate + NADP(+) = [amino-group carrier protein]-C-terminal-N-(1-carboxy-5-phosphooxy-5-oxopentan-1-yl)-L-glutamine + NADPH + H(+). The catalysed reaction is [amino-group carrier protein]-C-terminal-gamma-(L-glutamyl-5-semialdehyde)-L-glutamate + phosphate + NADP(+) = [amino-group carrier protein]-C-terminal-gamma-(5-phospho-L-glutamyl)-L-glutamate + NADPH + H(+). It participates in amino-acid biosynthesis; L-lysine biosynthesis via AAA pathway; L-lysine from L-alpha-aminoadipate (Thermus route): step 3/5. The protein operates within amino-acid biosynthesis; L-arginine biosynthesis. Involved in both the arginine and lysine biosynthetic pathways. This Picrophilus torridus (strain ATCC 700027 / DSM 9790 / JCM 10055 / NBRC 100828 / KAW 2/3) protein is Putative [LysW]-L-2-aminoadipate/[LysW]-L-glutamate phosphate reductase.